Consider the following 288-residue polypeptide: Small ribosomal subunit protein uS2 (288 aa).

The segment at 255-288 is disordered; the sequence is ANNRDHKNNKNNSTIDNAENLKEENLVGGSNNES.

The protein belongs to the universal ribosomal protein uS2 family.

This chain is Small ribosomal subunit protein uS2, found in Ehrlichia chaffeensis (strain ATCC CRL-10679 / Arkansas).